Reading from the N-terminus, the 480-residue chain is Argininosuccinate lyase (480 aa).

The span at 1 to 17 (MTDTTPSADLGASSQQP) shows a compositional bias: polar residues. A disordered region spans residues 1-24 (MTDTTPSADLGASSQQPAKAWSGR).

This sequence belongs to the lyase 1 family. Argininosuccinate lyase subfamily.

The protein localises to the cytoplasm. The enzyme catalyses 2-(N(omega)-L-arginino)succinate = fumarate + L-arginine. It participates in amino-acid biosynthesis; L-arginine biosynthesis; L-arginine from L-ornithine and carbamoyl phosphate: step 3/3. The polypeptide is Argininosuccinate lyase (Azoarcus sp. (strain BH72)).